Reading from the N-terminus, the 302-residue chain is Small ribosomal subunit biogenesis GTPase RsgA (302 aa).

The CP-type G domain occupies 69-229 (KNLLIRPKVA…VGDTPGFSKV (161 aa)). GTP contacts are provided by residues 118 to 121 (NKID) and 172 to 180 (GPSGVGKSS). The Zn(2+) site is built by cysteine 252, cysteine 257, histidine 259, and cysteine 265.

Belongs to the TRAFAC class YlqF/YawG GTPase family. RsgA subfamily. As to quaternary structure, monomer. Associates with 30S ribosomal subunit, binds 16S rRNA. Requires Zn(2+) as cofactor.

It localises to the cytoplasm. Functionally, one of several proteins that assist in the late maturation steps of the functional core of the 30S ribosomal subunit. Helps release RbfA from mature subunits. May play a role in the assembly of ribosomal proteins into the subunit. Circularly permuted GTPase that catalyzes slow GTP hydrolysis, GTPase activity is stimulated by the 30S ribosomal subunit. The sequence is that of Small ribosomal subunit biogenesis GTPase RsgA from Aquifex aeolicus (strain VF5).